The sequence spans 216 residues: MDKFTVHSGLVAPLDRENVDTDAIIPKQFLKSIKRTGFGPNLFDEWRYKDVGEPGMDNSKRPLNPDFVLNQPRYQGASILLARRNFGCGSSREHAPWALSQYGFRAVIAPSFADIFFNNCYKNGLLPVVLSEQQIDHLFNETNAFNGYKLTIDLDKQVVLTPSGQGYEFDIAPFRKYCMLNGFDDIGLTLRHADKIKSYEAERVAKMPWLNNRVVG.

This sequence belongs to the LeuD family. LeuD type 1 subfamily. As to quaternary structure, heterodimer of LeuC and LeuD.

The enzyme catalyses (2R,3S)-3-isopropylmalate = (2S)-2-isopropylmalate. It participates in amino-acid biosynthesis; L-leucine biosynthesis; L-leucine from 3-methyl-2-oxobutanoate: step 2/4. Functionally, catalyzes the isomerization between 2-isopropylmalate and 3-isopropylmalate, via the formation of 2-isopropylmaleate. This Cupriavidus pinatubonensis (strain JMP 134 / LMG 1197) (Cupriavidus necator (strain JMP 134)) protein is 3-isopropylmalate dehydratase small subunit.